Consider the following 785-residue polypeptide: MYKSLFFFLKIFAILILLGCSVTAYIIYHYSHDLPDYSQLVRYYPPSVTRIYSRDGKLMEEYAFERRVFVPINNVPSSLIESFIAAEDKNFYNHPGIDLLGIVRAAFLNISNYLHNRRMEGASTITQQVVKNFLLTNEVSLERKIKEVIISYMISRVFTKHQILELYLNQTFFGRGAYGVAAAAQNYFNKSIEELTIAESAFIAALPKAPSELNPDKNYSRVKARRDYVIERMFEDGYITRDTMKEAIGSPIVLRKRAKEETVTADYYAAQVREEVIKMLNSKEEFYRGGLTIITSLDAQMQKLAENALRKGLREFDRRHGFRKPIANIPLDHWQEALKNIPTPSSLLEYKLAVVLDVSDNHAKIGLIDGSKARIPIIEMQWARSNLKSVKTLLKKGDVIVVEPIKDCYALRQIPEINGAIMVMNPHTGQVLASVGGYDFSTSKFDRVTQALRQPGSLTKTFVYLAALENGVKPNQIFNDGPIEIMQGPGMPSWRPKNYEGQFLGEMTMRTGFEKSRNLITVRVATAVGLTKIVDIIKRFGINNEPKKVYSMVLGSIETTLSRITNAYAIIANGGKKVEPHFIELIKDRNGKIIYRRDNRECFSCNILDSDLDTAILEIPKEDIYRVTDEASDYQITSFLTGAIDSGTGYAARKLGKIIAGKTGTSNDSKDTWFIGFTPKIVVGSYVGYDTPKELGKKATGSNVVLPIFIDFMNHAYKDEPSLPFKVPDSIKLIAVDRITGKMIPDGTVIEAFKVNNIQMLENDYMIDNHDIFIPGISDQSQEIY.

Topologically, residues 1–6 (MYKSLF) are cytoplasmic. Residues 7–27 (FFLKIFAILILLGCSVTAYII) form a helical; Signal-anchor for type II membrane protein membrane-spanning segment. At 28 to 785 (YHYSHDLPDY…GISDQSQEIY (758 aa)) the chain is on the periplasmic side. The interval 49 to 220 (TRIYSRDGKL…SELNPDKNYS (172 aa)) is transglycosylase. Residue glutamate 87 is the Proton donor; for transglycosylase activity of the active site. Positions 398 to 711 (DVIVVEPIKD…SNVVLPIFID (314 aa)) are transpeptidase. Serine 457 acts as the Acyl-ester intermediate; for transpeptidase activity in catalysis.

This sequence in the N-terminal section; belongs to the glycosyltransferase 51 family. It in the C-terminal section; belongs to the transpeptidase family.

It localises to the cell inner membrane. It catalyses the reaction [GlcNAc-(1-&gt;4)-Mur2Ac(oyl-L-Ala-gamma-D-Glu-L-Lys-D-Ala-D-Ala)](n)-di-trans,octa-cis-undecaprenyl diphosphate + beta-D-GlcNAc-(1-&gt;4)-Mur2Ac(oyl-L-Ala-gamma-D-Glu-L-Lys-D-Ala-D-Ala)-di-trans,octa-cis-undecaprenyl diphosphate = [GlcNAc-(1-&gt;4)-Mur2Ac(oyl-L-Ala-gamma-D-Glu-L-Lys-D-Ala-D-Ala)](n+1)-di-trans,octa-cis-undecaprenyl diphosphate + di-trans,octa-cis-undecaprenyl diphosphate + H(+). The catalysed reaction is Preferential cleavage: (Ac)2-L-Lys-D-Ala-|-D-Ala. Also transpeptidation of peptidyl-alanyl moieties that are N-acyl substituents of D-alanine.. Its pathway is cell wall biogenesis; peptidoglycan biosynthesis. In terms of biological role, cell wall formation. Synthesis of cross-linked peptidoglycan from the lipid intermediates. The enzyme has a penicillin-insensitive transglycosylase N-terminal domain (formation of linear glycan strands) and a penicillin-sensitive transpeptidase C-terminal domain (cross-linking of the peptide subunits). The chain is Penicillin-binding protein 1A (mrcA) from Rickettsia typhi (strain ATCC VR-144 / Wilmington).